We begin with the raw amino-acid sequence, 296 residues long: 4-hydroxy-tetrahydrodipicolinate synthase (296 aa).

Position 49 (Thr49) interacts with pyruvate. Tyr137 functions as the Proton donor/acceptor in the catalytic mechanism. The active-site Schiff-base intermediate with substrate is Lys166. Residue Val208 participates in pyruvate binding.

It belongs to the DapA family. As to quaternary structure, homotetramer; dimer of dimers.

Its subcellular location is the cytoplasm. It catalyses the reaction L-aspartate 4-semialdehyde + pyruvate = (2S,4S)-4-hydroxy-2,3,4,5-tetrahydrodipicolinate + H2O + H(+). The protein operates within amino-acid biosynthesis; L-lysine biosynthesis via DAP pathway; (S)-tetrahydrodipicolinate from L-aspartate: step 3/4. Its function is as follows. Catalyzes the condensation of (S)-aspartate-beta-semialdehyde [(S)-ASA] and pyruvate to 4-hydroxy-tetrahydrodipicolinate (HTPA). In Desulforamulus reducens (strain ATCC BAA-1160 / DSM 100696 / MI-1) (Desulfotomaculum reducens), this protein is 4-hydroxy-tetrahydrodipicolinate synthase.